A 248-amino-acid polypeptide reads, in one-letter code: Triosephosphate isomerase (248 aa).

Position 9–11 (9–11) interacts with substrate; it reads NWK. The active-site Electrophile is the H94. E166 serves as the catalytic Proton acceptor. Substrate is bound by residues G172, S212, and 233-234; that span reads GG.

It belongs to the triosephosphate isomerase family. As to quaternary structure, homodimer.

The protein resides in the cytoplasm. The enzyme catalyses D-glyceraldehyde 3-phosphate = dihydroxyacetone phosphate. Its pathway is carbohydrate biosynthesis; gluconeogenesis. It functions in the pathway carbohydrate degradation; glycolysis; D-glyceraldehyde 3-phosphate from glycerone phosphate: step 1/1. In terms of biological role, involved in the gluconeogenesis. Catalyzes stereospecifically the conversion of dihydroxyacetone phosphate (DHAP) to D-glyceraldehyde-3-phosphate (G3P). This chain is Triosephosphate isomerase, found in Clostridium botulinum (strain Langeland / NCTC 10281 / Type F).